We begin with the raw amino-acid sequence, 234 residues long: MRLYQLSPQSLQFPDPNHALDNPNGLLAVGGDLSVARLKVAYRQGIFPWFSPGEPILWWSPNPRAVLLPGELHLSRSMKKFLKRHTFHATLNQAFDDVIHACAQEHHDGTWITPDIISAYRQLHQVGKAHSVEVWHNGALVGGLYGIEQGRLFCGESMFSRMDNASKYALLAFQQHFIRHGGHLIDCQVLNSHTASLGVSEIPRVRFLQQLSQWQDIAVEEGCWLPQQLAEPAF.

It belongs to the L/F-transferase family.

The protein resides in the cytoplasm. The catalysed reaction is N-terminal L-lysyl-[protein] + L-leucyl-tRNA(Leu) = N-terminal L-leucyl-L-lysyl-[protein] + tRNA(Leu) + H(+). The enzyme catalyses N-terminal L-arginyl-[protein] + L-leucyl-tRNA(Leu) = N-terminal L-leucyl-L-arginyl-[protein] + tRNA(Leu) + H(+). It carries out the reaction L-phenylalanyl-tRNA(Phe) + an N-terminal L-alpha-aminoacyl-[protein] = an N-terminal L-phenylalanyl-L-alpha-aminoacyl-[protein] + tRNA(Phe). Functions in the N-end rule pathway of protein degradation where it conjugates Leu, Phe and, less efficiently, Met from aminoacyl-tRNAs to the N-termini of proteins containing an N-terminal arginine or lysine. The chain is Leucyl/phenylalanyl-tRNA--protein transferase from Pectobacterium atrosepticum (strain SCRI 1043 / ATCC BAA-672) (Erwinia carotovora subsp. atroseptica).